The chain runs to 21 residues: Cold shock protein CspSt (21 aa).

Residues Lys-1–Asp-21 form the CSD domain.

Its subcellular location is the cytoplasm. The polypeptide is Cold shock protein CspSt (Streptococcus thermophilus).